The following is a 297-amino-acid chain: Ribosomal RNA small subunit methyltransferase H (297 aa).

S-adenosyl-L-methionine-binding positions include Gly34–His36, Asp54, Phe81, Asp99, and Gln106.

Belongs to the methyltransferase superfamily. RsmH family.

It is found in the cytoplasm. The catalysed reaction is cytidine(1402) in 16S rRNA + S-adenosyl-L-methionine = N(4)-methylcytidine(1402) in 16S rRNA + S-adenosyl-L-homocysteine + H(+). Its function is as follows. Specifically methylates the N4 position of cytidine in position 1402 (C1402) of 16S rRNA. The sequence is that of Ribosomal RNA small subunit methyltransferase H from Chlamydia pneumoniae (Chlamydophila pneumoniae).